We begin with the raw amino-acid sequence, 382 residues long: Heme A synthase (382 aa).

7 helical membrane passes run 37–57 (IRVWLQILFALVFIMIAVGGL), 126–146 (VIGVVWALGFGYFLVRRQVPA), 152–172 (LLFLGLLGGAQGAIGWWMVAS), 188–208 (LATHLGLAFVILGFIAWYIME), 231–251 (STGLLHFTFLQILLGALVAGI), 288–308 (LVQFMHRVTGYVLILFTVVVW), and 332–352 (LQIVLGIVTVLYGAPAHIAIF). His293 is a binding site for heme. His353 provides a ligand contact to heme. A helical transmembrane segment spans residues 356-376 (LAVIVWVLILRARFLSGYPIA).

Belongs to the COX15/CtaA family. Type 2 subfamily. Interacts with CtaB. Requires heme b as cofactor.

The protein resides in the cell membrane. The catalysed reaction is Fe(II)-heme o + 2 A + H2O = Fe(II)-heme a + 2 AH2. Its pathway is porphyrin-containing compound metabolism; heme A biosynthesis; heme A from heme O: step 1/1. Functionally, catalyzes the conversion of heme O to heme A by two successive hydroxylations of the methyl group at C8. The first hydroxylation forms heme I, the second hydroxylation results in an unstable dihydroxymethyl group, which spontaneously dehydrates, resulting in the formyl group of heme A. The protein is Heme A synthase of Roseobacter denitrificans (strain ATCC 33942 / OCh 114) (Erythrobacter sp. (strain OCh 114)).